A 171-amino-acid polypeptide reads, in one-letter code: ATP synthase subunit b (171 aa).

Residues 2–22 (FVVKMVLGFLILLSPLCATGL) form a helical membrane-spanning segment.

It belongs to the ATPase B chain family. In terms of assembly, F-type ATPases have 2 components, F(1) - the catalytic core - and F(0) - the membrane proton channel. F(1) has five subunits: alpha(3), beta(3), gamma(1), delta(1), epsilon(1). F(0) has three main subunits: a(1), b(2) and c(10-14). The alpha and beta chains form an alternating ring which encloses part of the gamma chain. F(1) is attached to F(0) by a central stalk formed by the gamma and epsilon chains, while a peripheral stalk is formed by the delta and b chains.

The protein resides in the cell inner membrane. Its function is as follows. F(1)F(0) ATP synthase produces ATP from ADP in the presence of a proton or sodium gradient. F-type ATPases consist of two structural domains, F(1) containing the extramembraneous catalytic core and F(0) containing the membrane proton channel, linked together by a central stalk and a peripheral stalk. During catalysis, ATP synthesis in the catalytic domain of F(1) is coupled via a rotary mechanism of the central stalk subunits to proton translocation. Component of the F(0) channel, it forms part of the peripheral stalk, linking F(1) to F(0). This chain is ATP synthase subunit b, found in Helicobacter pylori (strain G27).